Here is a 264-residue protein sequence, read N- to C-terminus: 3-methyl-2-oxobutanoate hydroxymethyltransferase (264 aa).

The Mg(2+) site is built by Asp-45 and Asp-84. 3-methyl-2-oxobutanoate contacts are provided by residues 45 to 46 (DS), Asp-84, and Lys-112. Residue Glu-114 participates in Mg(2+) binding. The active-site Proton acceptor is the Glu-181.

This sequence belongs to the PanB family. As to quaternary structure, homodecamer; pentamer of dimers. It depends on Mg(2+) as a cofactor.

Its subcellular location is the cytoplasm. It carries out the reaction 3-methyl-2-oxobutanoate + (6R)-5,10-methylene-5,6,7,8-tetrahydrofolate + H2O = 2-dehydropantoate + (6S)-5,6,7,8-tetrahydrofolate. It functions in the pathway cofactor biosynthesis; (R)-pantothenate biosynthesis; (R)-pantoate from 3-methyl-2-oxobutanoate: step 1/2. Its function is as follows. Catalyzes the reversible reaction in which hydroxymethyl group from 5,10-methylenetetrahydrofolate is transferred onto alpha-ketoisovalerate to form ketopantoate. This is 3-methyl-2-oxobutanoate hydroxymethyltransferase from Shewanella denitrificans (strain OS217 / ATCC BAA-1090 / DSM 15013).